The primary structure comprises 649 residues: MPHSGLLKSPVPFLPGTSPSADGPDSFSCMFEAIMESHRAKGTSYSSLASLEALASPGPTQSPFFTFEMPPQPPAPRPDPPAPAPLAPLEPDSGTSSVADGPWTQRREVEESDAGATLAPRKELPSPSHSEDSLGLGAAPLGSEPPLSQLVSDSDSELDSTERLALGSTDTLSNGQKADLEAAQRLAKRLYRLDGFRKADVARHLGKNNDFSKLVAGEYLKFFVFTGMTLDQALRVFLKELALMGETQERERVLAHFSQRYFQCNPEALSSEDGAHTLTCALMLLNTDLHGHNIGKRMTCGDFIGNLEGLNDGGDFPRELLKALYSSIKNEKLQWAIDEEELRRSLSELADPNPKVIKRVSGGSGSSSSPFLDLTPEPGAAVYKHGALVRKVHADPDCRKTPRGKRGWKSFHGILKGMILYLQKEEYQPGKALSEAELKNAISIHHALATRASDYSKRPHVFYLRTADWRVFLFQAPSLEQMQSWITRINVVAAMFSAPPFPAAVSSQKKFSRPLLPSAATRLSQEEQVRTHEAKLKAMASELREHRAAHLGKKARGKEAEEQRQKETYLEFEKSRYGTYAALLRVKMKAASEELDAIEAALAQAGSTEEGCPPPHSSPSLQPNPTSQPRAQRPGSEARAGAGSTRPKP.

2 disordered regions span residues 1-22 (MPHS…PSAD) and 57-161 (PGPT…LDST). The segment covering 70–88 (PPQPPAPRPDPPAPAPLAP) has biased composition (pro residues). Residues 120 to 132 (PRKELPSPSHSED) show a composition bias toward basic and acidic residues. Positions 137-331 (GAAPLGSEPP…KALYSSIKNE (195 aa)) constitute an SEC7 domain. Ser345 carries the phosphoserine modification. The PH domain maps to 381–494 (AVYKHGALVR…WITRINVVAA (114 aa)). 2 coiled-coil regions span residues 523-549 (LSQE…HRAA) and 581-608 (AALL…AGST). The interval 601-649 (ALAQAGSTEEGCPPPHSSPSLQPNPTSQPRAQRPGSEARAGAGSTRPKP) is disordered. Polar residues predominate over residues 618–630 (SPSLQPNPTSQPR).

This sequence belongs to the PSD family. In terms of assembly, interacts with ACTN1. Interacts (ARF6-bound form) with KCNK1; does not interact with KCNK1 in the absence of ARF6. In terms of tissue distribution, brain. Expressed in the hippocampal and dentate neuronal layers, cerebellar cortex, molecular layer of the hippocampus and dentate gyrus.

Its subcellular location is the cell membrane. It is found in the cell projection. The protein resides in the ruffle membrane. It localises to the cleavage furrow. Functionally, guanine nucleotide exchange factor for ARF6. Induces cytoskeletal remodeling. The sequence is that of PH and SEC7 domain-containing protein 1 (Psd) from Rattus norvegicus (Rat).